The primary structure comprises 308 residues: Transaldolase (308 aa).

Lys125 functions as the Schiff-base intermediate with substrate in the catalytic mechanism.

The protein belongs to the transaldolase family. Type 1 subfamily. In terms of assembly, homodimer.

Its subcellular location is the cytoplasm. It catalyses the reaction D-sedoheptulose 7-phosphate + D-glyceraldehyde 3-phosphate = D-erythrose 4-phosphate + beta-D-fructose 6-phosphate. The protein operates within carbohydrate degradation; pentose phosphate pathway; D-glyceraldehyde 3-phosphate and beta-D-fructose 6-phosphate from D-ribose 5-phosphate and D-xylulose 5-phosphate (non-oxidative stage): step 2/3. In terms of biological role, transaldolase is important for the balance of metabolites in the pentose-phosphate pathway. This Pseudomonas entomophila (strain L48) protein is Transaldolase.